The chain runs to 568 residues: Putative U-box domain-containing protein 55 (568 aa).

Positions 217-464 form a coiled coil; that stretch reads QSESDRNDQL…KVAAEKDAAS (248 aa). In terms of domain architecture, U-box spans 496-568; it reads QPPSYFICPI…AIQEWLQRNS (73 aa).

It catalyses the reaction S-ubiquitinyl-[E2 ubiquitin-conjugating enzyme]-L-cysteine + [acceptor protein]-L-lysine = [E2 ubiquitin-conjugating enzyme]-L-cysteine + N(6)-ubiquitinyl-[acceptor protein]-L-lysine.. It functions in the pathway protein modification; protein ubiquitination. In terms of biological role, functions as an E3 ubiquitin ligase. This is Putative U-box domain-containing protein 55 (PUB55) from Arabidopsis thaliana (Mouse-ear cress).